The chain runs to 277 residues: Ribosomal protein L11 methyltransferase (277 aa).

Residues Thr-130, Gly-151, Asp-172, and Asn-213 each contribute to the S-adenosyl-L-methionine site.

This sequence belongs to the methyltransferase superfamily. PrmA family.

The protein resides in the cytoplasm. The enzyme catalyses L-lysyl-[protein] + 3 S-adenosyl-L-methionine = N(6),N(6),N(6)-trimethyl-L-lysyl-[protein] + 3 S-adenosyl-L-homocysteine + 3 H(+). In terms of biological role, methylates ribosomal protein L11. The protein is Ribosomal protein L11 methyltransferase of Campylobacter concisus (strain 13826).